The chain runs to 1078 residues: Carbamoyl phosphate synthase large chain (1078 aa).

The segment at 1–401 (MARQPLVSSV…ALQKAVRGLE (401 aa)) is carboxyphosphate synthetic domain. ATP is bound by residues Arg-129, Arg-169, Gly-175, Gly-176, Arg-208, Leu-210, Glu-215, Gly-241, Val-242, His-243, Gln-284, and Glu-298. The region spanning 133 to 327 (KELLLEIGEP…IARIAAKLAI (195 aa)) is the ATP-grasp 1 domain. Mg(2+) is bound by residues Gln-284, Glu-298, and Asn-300. Mn(2+)-binding residues include Gln-284, Glu-298, and Asn-300. Positions 402 to 546 (TDQTDLTWED…YATYEDENEA (145 aa)) are oligomerization domain. The tract at residues 547–935 (PPLDSPKAVV…ALAKAFLAAG (389 aa)) is carbamoyl phosphate synthetic domain. Positions 677–867 (ERFLHELGIP…MVDVATQILL (191 aa)) constitute an ATP-grasp 2 domain. ATP-binding residues include Arg-713, Lys-752, Leu-754, Glu-758, Gly-783, Val-784, His-785, Ser-786, Gln-826, and Glu-838. Residues Gln-826, Glu-838, and Asn-840 each contribute to the Mg(2+) site. Residues Gln-826, Glu-838, and Asn-840 each coordinate Mn(2+). The MGS-like domain maps to 936 to 1078 (LAIERGAPVL…AYRTREAVLA (143 aa)). Residues 936-1078 (LAIERGAPVL…AYRTREAVLA (143 aa)) form an allosteric domain region.

It belongs to the CarB family. Composed of two chains; the small (or glutamine) chain promotes the hydrolysis of glutamine to ammonia, which is used by the large (or ammonia) chain to synthesize carbamoyl phosphate. Tetramer of heterodimers (alpha,beta)4. Requires Mg(2+) as cofactor. It depends on Mn(2+) as a cofactor.

The enzyme catalyses hydrogencarbonate + L-glutamine + 2 ATP + H2O = carbamoyl phosphate + L-glutamate + 2 ADP + phosphate + 2 H(+). It carries out the reaction hydrogencarbonate + NH4(+) + 2 ATP = carbamoyl phosphate + 2 ADP + phosphate + 2 H(+). It participates in amino-acid biosynthesis; L-arginine biosynthesis; carbamoyl phosphate from bicarbonate: step 1/1. It functions in the pathway pyrimidine metabolism; UMP biosynthesis via de novo pathway; (S)-dihydroorotate from bicarbonate: step 1/3. In terms of biological role, large subunit of the glutamine-dependent carbamoyl phosphate synthetase (CPSase). CPSase catalyzes the formation of carbamoyl phosphate from the ammonia moiety of glutamine, carbonate, and phosphate donated by ATP, constituting the first step of 2 biosynthetic pathways, one leading to arginine and/or urea and the other to pyrimidine nucleotides. The large subunit (synthetase) binds the substrates ammonia (free or transferred from glutamine from the small subunit), hydrogencarbonate and ATP and carries out an ATP-coupled ligase reaction, activating hydrogencarbonate by forming carboxy phosphate which reacts with ammonia to form carbamoyl phosphate. The chain is Carbamoyl phosphate synthase large chain from Thermomicrobium roseum (strain ATCC 27502 / DSM 5159 / P-2).